The primary structure comprises 186 residues: Intraflagellar transport protein 27 homolog (186 aa).

GTP is bound by residues 12–19 (GDPTVGKT), 64–68 (DSAGK), and 123–126 (NKTD).

It belongs to the small GTPase superfamily. Rab family. In terms of assembly, component of the IFT complex B, at least composed of IFT20, IFT22, IFT25, IFT27, IFT46, IFT52, TRAF3IP1/IFT54, IFT57, IFT74, IFT80, IFT81, and IFT88. Interacts with IFT25. Interacts with IFT70B. Interacts with RABL2/RABL2A; binding is equal in the presence of GTP or GDP. Interacts with IFT88. Interacts with ARL6; recognizes and binds with the GTP-free form of ARL6.

Its subcellular location is the cell projection. It localises to the cilium. The protein resides in the cytoplasm. It is found in the flagellum. Small GTPase-like component of the intraflagellar transport (IFT) complex B that promotes the exit of the BBSome complex from cilia via its interaction with ARL6. Not involved in entry of the BBSome complex into cilium. Prevents aggregation of GTP-free ARL6. Required for hedgehog signaling. Forms a subcomplex within the IFT complex B with IFT25. Its role in intraflagellar transport is mainly seen in tissues rich in ciliated cells such as kidney and testis. Essential for male fertility, spermiogenesis and sperm flagella formation. Plays a role in the early development of the kidney. May be involved in the regulation of ureteric bud initiation. The polypeptide is Intraflagellar transport protein 27 homolog (IFT27) (Bos taurus (Bovine)).